The following is a 943-amino-acid chain: Protein translocase subunit SecA (943 aa).

ATP-binding positions include glutamine 90, 108–112 (GEGKT), and aspartate 509. The tract at residues 535 to 564 (PDNEHKPPIPKQRNSKSKGGFSKKASSKLK) is disordered.

It belongs to the SecA family. As to quaternary structure, monomer and homodimer. Part of the essential Sec protein translocation apparatus which comprises SecA, SecYEG and auxiliary proteins SecDF. Other proteins may also be involved.

The protein resides in the cell inner membrane. The protein localises to the cellular thylakoid membrane. It is found in the cytoplasm. The enzyme catalyses ATP + H2O + cellular proteinSide 1 = ADP + phosphate + cellular proteinSide 2.. Its function is as follows. Part of the Sec protein translocase complex. Interacts with the SecYEG preprotein conducting channel. Has a central role in coupling the hydrolysis of ATP to the transfer of proteins into and across the cell membrane, serving as an ATP-driven molecular motor driving the stepwise translocation of polypeptide chains across the membrane. In terms of biological role, probably participates in protein translocation into and across both the cytoplasmic and thylakoid membranes in cyanobacterial cells. The chain is Protein translocase subunit SecA from Prochlorococcus marinus (strain MIT 9215).